The primary structure comprises 381 residues: Fe-S cluster assembly protein DRE2 (381 aa).

Positions 8–165 (AQGSGRFLLL…KPDFGAQQAV (158 aa)) are N-terminal SAM-like domain. The segment at 100–134 (RNRDNQIWGSGSDSAAGLGSSDGDGGGGEKMSSSE) is disordered. The span at 108–118 (GSGSDSAAGLG) shows a compositional bias: low complexity. Over residues 119–128 (SSDGDGGGGE) the composition is skewed to gly residues. Residues 166-273 (PLKLGRKKNL…EEELLGEYDM (108 aa)) are linker. 4 residues coordinate [2Fe-2S] cluster: cysteine 283, cysteine 294, cysteine 297, and cysteine 299. The interval 283–299 (CRPKAGKRRRACKDCTC) is fe-S binding site A. Residues cysteine 344, cysteine 347, cysteine 355, and cysteine 358 each coordinate [4Fe-4S] cluster. Short sequence motifs (cx2C motif) lie at residues 344–347 (CGNC) and 355–358 (CDGC). A fe-S binding site B region spans residues 344–358 (CGNCALGDAFRCDGC).

It belongs to the anamorsin family. As to quaternary structure, monomer. Interacts with TAH18. Interacts with MIA40. It depends on [2Fe-2S] cluster as a cofactor. The cofactor is [4Fe-4S] cluster.

The protein localises to the cytoplasm. It is found in the mitochondrion intermembrane space. In terms of biological role, component of the cytosolic iron-sulfur (Fe-S) protein assembly (CIA) machinery required for the maturation of extramitochondrial Fe-S proteins. Part of an electron transfer chain functioning in an early step of cytosolic Fe-S biogenesis, facilitating the de novo assembly of a [4Fe-4S] cluster on the scaffold complex CFD1-NBP35. Electrons are transferred to DRE2 from NADPH via the FAD- and FMN-containing protein TAH18. TAH18-DRE2 are also required for the assembly of the diferric tyrosyl radical cofactor of ribonucleotide reductase (RNR), probably by providing electrons for reduction during radical cofactor maturation in the catalytic small subunit RNR2. In Paracoccidioides brasiliensis (strain Pb18), this protein is Fe-S cluster assembly protein DRE2.